The primary structure comprises 452 residues: Bifunctional protein GlmU (452 aa).

Residues 1–226 (MAFSVVVLAA…AVEVEGVNNR (226 aa)) are pyrophosphorylase. UDP-N-acetyl-alpha-D-glucosamine is bound by residues 8–11 (LAAG), K22, Q73, and 78–79 (GT). D102 contributes to the Mg(2+) binding site. Positions 137, 151, 166, and 224 each coordinate UDP-N-acetyl-alpha-D-glucosamine. N224 contributes to the Mg(2+) binding site. The segment at 227-247 (LQLANLERALQNRQADELMTN) is linker. The tract at residues 248-452 (GVTLLDPSRF…IPNWPRPTKK (205 aa)) is N-acetyltransferase. R330 and K348 together coordinate UDP-N-acetyl-alpha-D-glucosamine. Catalysis depends on H360, which acts as the Proton acceptor. Positions 363 and 374 each coordinate UDP-N-acetyl-alpha-D-glucosamine. Acetyl-CoA is bound by residues A377, 383–384 (NY), S402, A420, and R437.

In the N-terminal section; belongs to the N-acetylglucosamine-1-phosphate uridyltransferase family. The protein in the C-terminal section; belongs to the transferase hexapeptide repeat family. Homotrimer. The cofactor is Mg(2+).

The protein localises to the cytoplasm. It carries out the reaction alpha-D-glucosamine 1-phosphate + acetyl-CoA = N-acetyl-alpha-D-glucosamine 1-phosphate + CoA + H(+). The enzyme catalyses N-acetyl-alpha-D-glucosamine 1-phosphate + UTP + H(+) = UDP-N-acetyl-alpha-D-glucosamine + diphosphate. The protein operates within nucleotide-sugar biosynthesis; UDP-N-acetyl-alpha-D-glucosamine biosynthesis; N-acetyl-alpha-D-glucosamine 1-phosphate from alpha-D-glucosamine 6-phosphate (route II): step 2/2. It functions in the pathway nucleotide-sugar biosynthesis; UDP-N-acetyl-alpha-D-glucosamine biosynthesis; UDP-N-acetyl-alpha-D-glucosamine from N-acetyl-alpha-D-glucosamine 1-phosphate: step 1/1. Its pathway is bacterial outer membrane biogenesis; LPS lipid A biosynthesis. Functionally, catalyzes the last two sequential reactions in the de novo biosynthetic pathway for UDP-N-acetylglucosamine (UDP-GlcNAc). The C-terminal domain catalyzes the transfer of acetyl group from acetyl coenzyme A to glucosamine-1-phosphate (GlcN-1-P) to produce N-acetylglucosamine-1-phosphate (GlcNAc-1-P), which is converted into UDP-GlcNAc by the transfer of uridine 5-monophosphate (from uridine 5-triphosphate), a reaction catalyzed by the N-terminal domain. In Alteromonas mediterranea (strain DSM 17117 / CIP 110805 / LMG 28347 / Deep ecotype), this protein is Bifunctional protein GlmU.